The primary structure comprises 167 residues: MAPIKRGDRFPTTDDVYYIPPEGGEPGPLELSKFVKTKKFVVVSVPGAFTPPCTEQHLPGYIKNLPRILSKGVDFVLVISQNDPFVLKGWKKELGAADAKKLVFVSDPNLKLTKKLGSTIDLSAIGLGTRSGRLALIVNRSGIVEYAAIENGGEVDVSTAQKIIAKL.

One can recognise a Thioredoxin domain in the interval isoleucine 4–leucine 167. The Cysteine sulfenic acid (-SOH) intermediate role is filled by cysteine 53. Positions alanine 165–leucine 167 match the Microbody targeting signal motif.

Belongs to the peroxiredoxin family. Prx5 subfamily.

It is found in the peroxisome membrane. The catalysed reaction is a hydroperoxide + [thioredoxin]-dithiol = an alcohol + [thioredoxin]-disulfide + H2O. Its function is as follows. Thiol-specific peroxidase that catalyzes the reduction of hydrogen peroxide and organic hydroperoxides to water and alcohols, respectively. Plays a role in cell protection against oxidative stress by detoxifying peroxides and as sensor of hydrogen peroxide-mediated signaling events. This is Putative peroxiredoxin-A (PMPA) from Candida boidinii (Yeast).